The primary structure comprises 240 residues: Hairy and enhancer of split-related protein HELT (240 aa).

Positions 10–65 (RTPVSHKVIEKRRRDRINRCLNELGKTVPMALAKQSSGKLEKAEILEMTVQYLRAL) constitute a bHLH domain. K48 carries the post-translational modification N6-acetyllysine. Positions 86 to 121 (FHYGYHECMKNLVHYLTTVERMETKDTKYARILAFL) constitute an Orange domain.

The protein belongs to the HEY family. In terms of assembly, self-associates. Interacts with HES5 and HEY2. As to expression, expressed in heart and testis.

It is found in the nucleus. In terms of biological role, transcriptional repressor which binds preferentially to the canonical E box sequence 5'-CACGCG-3'. Required for the development of GABAergic neurons. The sequence is that of Hairy and enhancer of split-related protein HELT (Helt) from Mus musculus (Mouse).